Here is a 402-residue protein sequence, read N- to C-terminus: Multidrug resistance protein MdtH (402 aa).

The Cytoplasmic portion of the chain corresponds to 1-12 (MSRVSQARNLGK). Residues 13-33 (YFLLIDNMLVVLGFFVVFPLI) traverse the membrane as a helical segment. Residues 34–98 (SIRFVDQMGW…GFATMGIAHE (65 aa)) lie on the Periplasmic side of the membrane. Residues 99-116 (PWLLWFSCFLSGLGGTLF) traverse the membrane as a helical segment. The Cytoplasmic segment spans residues 117–138 (DPPRSALVVKLIRPEQRGRFFS). The chain crosses the membrane as a helical span at residues 139–159 (LLMMQDSAGAVIGALLGSWLL). At 160-164 (QYDFR) the chain is on the periplasmic side. The chain crosses the membrane as a helical span at residues 165–185 (LVCATGAILFILCALFNAWLL). Over 186–213 (PAWKLSTVRTPVREGMRRVMSDKRFVTY) the chain is Cytoplasmic. A helical transmembrane segment spans residues 214 to 234 (VLTLAGYYMLAVQVMLMLPIM). The Periplasmic portion of the chain corresponds to 235-243 (VNDIAGSPA). A helical membrane pass occupies residues 244–264 (AVKWMYAIEACLSLTLLYPIA). Over 265-276 (RWSEKRFRLEHR) the chain is Cytoplasmic. The chain crosses the membrane as a helical span at residues 277–297 (LMAGLLVMSLSMLPIGMVGNL). The Periplasmic portion of the chain corresponds to 298–299 (QQ). A helical transmembrane segment spans residues 300–320 (LFTLICAFYIGSVIAEPARET). The Cytoplasmic segment spans residues 321-339 (LSASLADARARGSYMGFSR). The helical transmembrane segment at 340–360 (LGLAIGGAIGYIGGGWLFDMG) threads the bilayer. The Periplasmic portion of the chain corresponds to 361-367 (KALAQPE). Residues 368–388 (LPWMMLGIIGFITFLALGWQF) traverse the membrane as a helical segment. The Cytoplasmic segment spans residues 389-402 (SHKRTPRRMLEPGA).

This sequence belongs to the major facilitator superfamily. DHA1 family. MdtH (TC 2.A.1.2.21) subfamily.

It localises to the cell inner membrane. The chain is Multidrug resistance protein MdtH from Salmonella agona (strain SL483).